A 179-amino-acid chain; its full sequence is Endoribonuclease YbeY (179 aa).

Zn(2+)-binding residues include H148, H152, and H158.

The protein belongs to the endoribonuclease YbeY family. Zn(2+) is required as a cofactor.

The protein localises to the cytoplasm. Functionally, single strand-specific metallo-endoribonuclease involved in late-stage 70S ribosome quality control and in maturation of the 3' terminus of the 16S rRNA. The sequence is that of Endoribonuclease YbeY from Prochlorococcus marinus (strain AS9601).